Reading from the N-terminus, the 52-residue chain is Proteinase inhibitor (52 aa).

Glutamine 1 is modified (pyrrolidone carboxylic acid). 4 cysteine pairs are disulfide-bonded: cysteine 3–cysteine 40, cysteine 6–cysteine 24, cysteine 7–cysteine 36, and cysteine 13–cysteine 49.

This sequence belongs to the protease inhibitor I20 (potato type II proteinase inhibitor) family.

The protein resides in the secreted. This Solanum melongena (Eggplant) protein is Proteinase inhibitor.